Here is a 174-residue protein sequence, read N- to C-terminus: Transcription factor bHLH36 (174 aa).

The region spanning 1-53 is the bHLH domain; sequence MEKMMHRETERQRRQEMASLYASLRSLLPLHFIKGKRSTSDQVNEAVNYIKYL.

Homodimer. As to expression, expressed constitutively in roots, leaves, stems, and flowers.

Its subcellular location is the nucleus. In Arabidopsis thaliana (Mouse-ear cress), this protein is Transcription factor bHLH36 (BHLH36).